The primary structure comprises 205 residues: Troponin I, cardiac muscle (205 aa).

Residues 1–38 (MADQSGNAAPPPVRRRSSANYRAYATEPHAKKKSKISA) are disordered. Ala2 bears the N-acetylalanine mark. Ser5 is modified (phosphoserine). Residues Ser17 and Ser18 each carry the phosphoserine; by PKA and PKD/PRKD1 modification. Tyr21 is modified (phosphotyrosine). Thr26 is modified (phosphothreonine; by STK4/MST1). An involved in binding TNC region spans residues 27–74 (EPHAKKKSKISASRKLQLKTLMLQIAKQELEREAVERRGEKGRALSTR). 2 positions are modified to phosphoserine; by PKC/PRKCE: Ser37 and Ser39. Thr46 is modified (phosphothreonine; by STK4/MST1). Residue Ser72 is modified to Phosphoserine. Position 73 is a phosphothreonine (Thr73). Positions 124–145 (NQKIFDLRGKFKRPTLRRVRIS) are involved in binding TNC and actin. Thr138 is modified (phosphothreonine; by STK4/MST1). Ser145 is modified (phosphoserine; by PAK3). Position 176 is a phosphothreonine (Thr176). Position 194 is a phosphoserine (Ser194).

Belongs to the troponin I family. As to quaternary structure, binds to actin and tropomyosin. Interacts with TRIM63. Interacts with STK4/MST1. Post-translationally, phosphorylated at Ser-17 and Ser-18 by PRKD1; phosphorylation reduces myofilament calcium sensitivity. Phosphorylated preferentially at Thr-26. Phosphorylation by STK4/MST1 alters its binding affinity to TNNC1 (cardiac Tn-C) and TNNT2 (cardiac Tn-T). Phosphorylated at Ser-37 and Ser-39 by PRKCE; phosphorylation increases myocardium contractile dysfunction.

Functionally, troponin I is the inhibitory subunit of troponin, the thin filament regulatory complex which confers calcium-sensitivity to striated muscle actomyosin ATPase activity. This Equus caballus (Horse) protein is Troponin I, cardiac muscle (TNNI3).